Here is a 234-residue protein sequence, read N- to C-terminus: Synaptogyrin-1 (234 aa).

Met-1 carries the N-acetylmethionine modification. Residues Met-1–Gln-23 lie on the Cytoplasmic side of the membrane. The region spanning Leu-20–Gln-173 is the MARVEL domain. Residues Pro-24 to Val-44 traverse the membrane as a helical segment. Topologically, residues Asn-45–Gly-71 are lumenal. The chain crosses the membrane as a helical span at residues Val-72–Phe-92. Over Pro-93 to Ala-104 the chain is Cytoplasmic. The chain crosses the membrane as a helical span at residues Val-105–Phe-125. The Lumenal segment spans residues Leu-126–Arg-148. The helical transmembrane segment at Ala-149–Phe-169 threads the bilayer. The Cytoplasmic segment spans residues Gln-170–Tyr-234. Positions Glu-201 to Tyr-234 are disordered.

The protein belongs to the synaptogyrin family. As to expression, nervous system (at protein level).

It localises to the cytoplasmic vesicle. The protein localises to the secretory vesicle. It is found in the synaptic vesicle membrane. Its subcellular location is the melanosome. Functionally, may play a role in regulated exocytosis. Modulates the localization of synaptophysin/SYP into synaptic-like microvesicles and may therefore play a role in synaptic-like microvesicle formation and/or maturation. Involved in the regulation of short-term and long-term synaptic plasticity. This chain is Synaptogyrin-1, found in Rattus norvegicus (Rat).